A 405-amino-acid chain; its full sequence is MRSWSTVMLAVLATAATVFGHDADPEMKMTTPQIIMRWGYPAMIYDVTTEDGYILELHRIPYGKTNVTWPNGKKPVVFMQHGLECSSSNWVVNLPTESAAFLFADAGYDVWLGNFRGNTYSMKHKNLKPSHSAFWDWSWDEMQQYDLPAMIEKALEVTGQDSLYYIGHSQGTLTMFSRLSEDKVGWGNKIKKFFALAPVGSVKHIKGALKFFADYFSLEFDGWFDVFGSGEFLPNNWIMKLVSESVCAGLKVEAGVCDDVMFLIAGPESNQLNATRVPIYVAHTPAGTSTQNIVHWIQMVRHGGTPKYDYGEKGNKKHYGQANVPAYDFTTVNRPVYLYWGDSDWLADPTDVTDFLLTHLNPSTVVQNNKLIDYNHLDFIWGLRAPKDIYEPIIDIVRNDVLNGS.

A signal peptide spans 1-20 (MRSWSTVMLAVLATAATVFG). Asparagine 66 is a glycosylation site (N-linked (GlcNAc...) asparagine). The active-site Nucleophile is serine 169. Asparagine 273 carries N-linked (GlcNAc...) asparagine glycosylation. Residues aspartate 344 and histidine 376 each act as charge relay system in the active site.

It belongs to the AB hydrolase superfamily. Lipase family.

The protein resides in the secreted. It localises to the lysosome lumen. Functionally, lipase that, together with lipl-3, plays a role in the response to nutrient deprivation by controlling lipid metabolism. Specifically, involved in the breakdown of lipids during lipophagy, a process during which lipids contained in lipid droplets that have been delivered to lysosomes by autophagy are degraded. The protein is Lipase lipl-1 of Caenorhabditis elegans.